Consider the following 202-residue polypeptide: Kunitz trypsin inhibitor 7 (202 aa).

An N-terminal signal peptide occupies residues 1-25; the sequence is MKTFRSMLISLLLVAITTTSGVVEG. C69 and C115 are oxidised to a cystine. 4 N-linked (GlcNAc...) asparagine glycosylation sites follow: N93, N136, N144, and N198.

This sequence belongs to the protease inhibitor I3 (leguminous Kunitz-type inhibitor) family.

In terms of biological role, exhibits Kunitz trypsin protease inhibitor activity. The polypeptide is Kunitz trypsin inhibitor 7 (Arabidopsis thaliana (Mouse-ear cress)).